We begin with the raw amino-acid sequence, 440 residues long: Proline--tRNA ligase (440 aa).

It belongs to the class-II aminoacyl-tRNA synthetase family. ProS type 2 subfamily. As to quaternary structure, homodimer.

Its subcellular location is the cytoplasm. It carries out the reaction tRNA(Pro) + L-proline + ATP = L-prolyl-tRNA(Pro) + AMP + diphosphate. Catalyzes the attachment of proline to tRNA(Pro) in a two-step reaction: proline is first activated by ATP to form Pro-AMP and then transferred to the acceptor end of tRNA(Pro). In Rhizobium leguminosarum bv. trifolii (strain WSM2304), this protein is Proline--tRNA ligase.